A 37-amino-acid chain; its full sequence is Large ribosomal subunit protein bL36 (37 aa).

It belongs to the bacterial ribosomal protein bL36 family.

This is Large ribosomal subunit protein bL36 from Nostoc punctiforme (strain ATCC 29133 / PCC 73102).